The sequence spans 642 residues: MPIITLPDGSQRQFDNSVSTMDVALSIGPGLAKATIAGRVNGQRVDACDLIEEDASLEIITTKDEVDGLEIVRHSCAHLLGHALKQLYPNAKMAIGPTIDNGFYYDIDLEESLTQEDLEKIEARMKALAKTKYQVIKKKVSWQEARDAFEARGETYKMEILDENVSRDDRPGLYHHEEYIDMCRGPHVPNMSFCQHFTLLNVAGAYWRGNSDNKMLQRIYGTAFHDKKALKDHLTRLEEAAKRDHRKIGKQLDLFHMQQEAPGMVFWHHNGWSVFRDLEVFIREKLTEYGYQEVKGPLMMDRVLWERSGHWDKYADAMFTTSSENREYAIKPMNCPGHVQIFNQGLKSYRDLPLRMAEFGSCHRNEPSGALHGIMRVRGFTQDDAHIFCTESQIQDEVTNCIKMVYDTYQTFGFDNIAVKLSTRPEQRVGSDEIWDQSEEALKQALESMDIAYEIQEGEGAFYGPKIEFTLFDCLGRAWQCGTVQLDFNLPNRLGATYVGENNERLVPVMIHRAILGSLERFIGILIEEYAGFFPTWLAPEQAVIMNITDKQADYVQEIAQKLQKCGIRAKADLRNEKIGFKIREHTLKRVPFMLVCGDQEMEAGEIAVRTRKGNDLGKFKVDDFVSYIQDQIASRKLNLEE.

The TGS domain occupies 1-61 (MPIITLPDGS…EEDASLEIIT (61 aa)). The interval 244-535 (DHRKIGKQLD…LIEEYAGFFP (292 aa)) is catalytic. Zn(2+)-binding residues include cysteine 335, histidine 386, and histidine 512.

This sequence belongs to the class-II aminoacyl-tRNA synthetase family. Homodimer. The cofactor is Zn(2+).

It is found in the cytoplasm. The catalysed reaction is tRNA(Thr) + L-threonine + ATP = L-threonyl-tRNA(Thr) + AMP + diphosphate + H(+). Functionally, catalyzes the attachment of threonine to tRNA(Thr) in a two-step reaction: L-threonine is first activated by ATP to form Thr-AMP and then transferred to the acceptor end of tRNA(Thr). Also edits incorrectly charged L-seryl-tRNA(Thr). The chain is Threonine--tRNA ligase from Vibrio vulnificus (strain YJ016).